A 347-amino-acid polypeptide reads, in one-letter code: Methylthioribose-1-phosphate isomerase (347 aa).

Residues 45–47, R88, and Q197 contribute to the substrate site; that span reads RGA. The active-site Proton donor is the D238. 248–249 is a substrate binding site; it reads NK.

Belongs to the eIF-2B alpha/beta/delta subunits family. MtnA subfamily.

The enzyme catalyses 5-(methylsulfanyl)-alpha-D-ribose 1-phosphate = 5-(methylsulfanyl)-D-ribulose 1-phosphate. Its pathway is amino-acid biosynthesis; L-methionine biosynthesis via salvage pathway; L-methionine from S-methyl-5-thio-alpha-D-ribose 1-phosphate: step 1/6. Catalyzes the interconversion of methylthioribose-1-phosphate (MTR-1-P) into methylthioribulose-1-phosphate (MTRu-1-P). The polypeptide is Methylthioribose-1-phosphate isomerase (Nostoc sp. (strain PCC 7120 / SAG 25.82 / UTEX 2576)).